The sequence spans 400 residues: Putative zinc-binding protein ORF78 (400 aa).

Residues 9-33 (LPRKRRAVAQPRTRQPPPKVHREDT) are disordered.

The chain is Putative zinc-binding protein ORF78 (ORF78) from Ictalurid herpesvirus 1 (strain Auburn) (IcHV-1).